The primary structure comprises 253 residues: Triosephosphate isomerase (253 aa).

Residue 8–10 (NWK) participates in substrate binding. H91 acts as the Electrophile in catalysis. E168 serves as the catalytic Proton acceptor. Substrate contacts are provided by residues G174, S213, and 234–235 (GG).

This sequence belongs to the triosephosphate isomerase family. In terms of assembly, homodimer.

The protein localises to the cytoplasm. The catalysed reaction is D-glyceraldehyde 3-phosphate = dihydroxyacetone phosphate. It participates in carbohydrate biosynthesis; gluconeogenesis. Its pathway is carbohydrate degradation; glycolysis; D-glyceraldehyde 3-phosphate from glycerone phosphate: step 1/1. Involved in the gluconeogenesis. Catalyzes stereospecifically the conversion of dihydroxyacetone phosphate (DHAP) to D-glyceraldehyde-3-phosphate (G3P). This chain is Triosephosphate isomerase, found in Acidiphilium cryptum (strain JF-5).